We begin with the raw amino-acid sequence, 363 residues long: Fructose-bisphosphate aldolase C (363 aa).

Tyr-5 is subject to Phosphotyrosine. A phosphoserine mark is found at Ser-36, Ser-39, and Ser-45. Residue Arg-56 coordinates substrate. An N6-acetyllysine modification is found at Lys-111. Lys-147 contacts substrate. The Proton acceptor role is filled by Glu-188. Lys-230 functions as the Schiff-base intermediate with dihydroxyacetone-P in the catalytic mechanism.

Belongs to the class I fructose-bisphosphate aldolase family. Homotetramer. Interacts with ATP6V1E1. In terms of tissue distribution, high expression in the adult brain.

The enzyme catalyses beta-D-fructose 1,6-bisphosphate = D-glyceraldehyde 3-phosphate + dihydroxyacetone phosphate. It participates in carbohydrate degradation; glycolysis; D-glyceraldehyde 3-phosphate and glycerone phosphate from D-glucose: step 4/4. The polypeptide is Fructose-bisphosphate aldolase C (Aldoc) (Rattus norvegicus (Rat)).